A 312-amino-acid polypeptide reads, in one-letter code: DNA-directed RNA polymerase subunit alpha (312 aa).

The segment at 1–229 (MLQYQIDRIE…ELFQPLATVT (229 aa)) is alpha N-terminal domain (alpha-NTD). Residues 236–312 (IEPEPSAEAQ…ISIPQSRTSV (77 aa)) are alpha C-terminal domain (alpha-CTD).

The protein belongs to the RNA polymerase alpha chain family. In cyanobacteria the RNAP catalytic core is composed of 2 alpha, 1 beta, 1 beta', 1 gamma and 1 omega subunit. When a sigma factor is associated with the core the holoenzyme is formed, which can initiate transcription.

It catalyses the reaction RNA(n) + a ribonucleoside 5'-triphosphate = RNA(n+1) + diphosphate. In terms of biological role, DNA-dependent RNA polymerase catalyzes the transcription of DNA into RNA using the four ribonucleoside triphosphates as substrates. This Synechococcus sp. (strain CC9311) protein is DNA-directed RNA polymerase subunit alpha.